A 64-amino-acid chain; its full sequence is uncharacterized protein (64 aa).

Polar residues predominate over residues M1–H14. A disordered region spans residues M1 to P42.

This is an uncharacterized protein from Dictyostelium discoideum (Social amoeba).